Consider the following 218-residue polypeptide: Ras-related protein Rab-11B (218 aa).

At Gly-2 the chain carries N-acetylglycine. A Citrulline modification is found at Arg-4. GTP is bound by residues Ser-20, Gly-21, Gly-23, Lys-24, Ser-25, Asn-26, Asn-37, Leu-38, Ser-40, Ser-42, and Thr-43. Mg(2+) is bound at residue Ser-25. The short motif at 36–47 (FNLESKSTIGVE) is the Switch 1 element. 2 residues coordinate Mg(2+): Thr-43 and Asp-66. The short motif at 67-86 (TAGQERYRAITSAYYRGAVG) is the Switch 2 element. Gly-69, Asn-124, Lys-125, Asp-127, Ala-155, and Leu-156 together coordinate GTP. Residues 184 to 218 (RAAHDESPGNNVVDISVPPTTDGQKPNKLQCCQNL) are disordered. 2 S-geranylgeranyl cysteine lipidation sites follow: Cys-214 and Cys-215. The residue at position 215 (Cys-215) is a Cysteine methyl ester. The propeptide at 216 to 218 (QNL) is removed in mature form.

Belongs to the small GTPase superfamily. Rab family. In terms of assembly, interacts with KCNMA1. Interacts with RAB11FIP1, RAB11FIP2, RAB11FIP3 and RAB11FIP4. May interact with TBC1D14. Interacts with ATP6V1E1. Interacts with PI4KB. Interacts (GDP-bound form) with ZFYVE27. Interacts (GDP-bound form) with KIF5A in a ZFYVE27-dependent manner. Interacts with RELCH. Interacts (in GTP-bound form) with TBC1D8B (via domain Rab-GAP TBC). Forms a complex containing RAB11B, ASAP1, Rabin8/RAB3IP, RAP11FIP3 and ARF4. Interacts with WDR44. Requires Mg(2+) as cofactor. Post-translationally, citrullinated by PADI4. In terms of processing, (Microbial infection) Glycosylated on arginine residues by S.typhimurium protein Ssek3.

Its subcellular location is the recycling endosome membrane. The protein localises to the cytoplasmic vesicle. The protein resides in the secretory vesicle. It is found in the synaptic vesicle membrane. It localises to the phagosome membrane. It catalyses the reaction GTP + H2O = GDP + phosphate + H(+). Its activity is regulated as follows. Regulated by guanine nucleotide exchange factors (GEFs) which promote the exchange of bound GDP for free GTP. Regulated by GTPase activating proteins (GAPs) which increase the GTP hydrolysis activity. Inhibited by GDP dissociation inhibitors (GDIs) which prevent Rab-GDP dissociation. In terms of biological role, the small GTPases Rab are key regulators of intracellular membrane trafficking, from the formation of transport vesicles to their fusion with membranes. Rabs cycle between an inactive GDP-bound form and an active GTP-bound form that is able to recruit to membranes different set of downstream effectors directly responsible for vesicle formation, movement, tethering and fusion. The small Rab GTPase RAB11B plays a role in endocytic recycling, regulating apical recycling of several transmembrane proteins including cystic fibrosis transmembrane conductance regulator/CFTR, epithelial sodium channel/ENaC, potassium voltage-gated channel, and voltage-dependent L-type calcium channel. May also regulate constitutive and regulated secretion, like insulin granule exocytosis. Required for melanosome transport and release from melanocytes. Also regulates V-ATPase intracellular transport in response to extracellular acidosis. Promotes Rabin8/RAB3IP preciliary vesicular trafficking to mother centriole by forming a ciliary targeting complex containing Rab11, ASAP1, Rabin8/RAB3IP, RAB11FIP3 and ARF4, thereby regulating ciliogenesis initiation. On the contrary, upon LPAR1 receptor signaling pathway activation, interaction with phosphorylated WDR44 prevents Rab11-RAB3IP-RAB11FIP3 complex formation and cilia growth. In Homo sapiens (Human), this protein is Ras-related protein Rab-11B.